The following is a 675-amino-acid chain: Acetyl-coenzyme A synthetase 1 (675 aa).

Polar residues predominate over residues 1-10 (MPESTQQSHL). The segment at 1 to 32 (MPESTQQSHLSLDHEKMQQPPKGFTERSKTKP) is disordered. CoA-binding positions include 212–215 (RGGK) and threonine 331. ATP-binding positions include 407–409 (GEP), 431–436 (DTYWQT), aspartate 522, and arginine 537. Serine 545 lines the CoA pocket. Arginine 548 is a binding site for ATP. Arginine 609 is a binding site for CoA.

It belongs to the ATP-dependent AMP-binding enzyme family.

The catalysed reaction is acetate + ATP + CoA = acetyl-CoA + AMP + diphosphate. This chain is Acetyl-coenzyme A synthetase 1 (ACS1), found in Candida albicans (Yeast).